We begin with the raw amino-acid sequence, 337 residues long: Glyceraldehyde-3-phosphate dehydrogenase 2 (337 aa).

NAD(+)-binding positions include 11–12 (RI), aspartate 35, arginine 79, and threonine 121. D-glyceraldehyde 3-phosphate is bound by residues 153-155 (SCT), threonine 184, arginine 199, 212-213 (TG), and arginine 235. The active-site Nucleophile is cysteine 154. Asparagine 317 is a binding site for NAD(+).

Belongs to the glyceraldehyde-3-phosphate dehydrogenase family. In terms of assembly, homotetramer.

Its subcellular location is the cytoplasm. It carries out the reaction D-glyceraldehyde 3-phosphate + phosphate + NADP(+) = (2R)-3-phospho-glyceroyl phosphate + NADPH + H(+). The catalysed reaction is D-glyceraldehyde 3-phosphate + phosphate + NAD(+) = (2R)-3-phospho-glyceroyl phosphate + NADH + H(+). It participates in carbohydrate degradation; glycolysis; pyruvate from D-glyceraldehyde 3-phosphate: step 1/5. Its function is as follows. Involved in photosynthetic carbon assimilation. Catalyzes the NAD(P)-dependent oxidative phosphorylation of glyceraldehyde 3-phosphate (G3P) to 1,3-bisphosphoglycerate (BPG). The first reaction step involves the formation of a hemiacetal intermediate between G3P and a cysteine residue, and this hemiacetal intermediate is then oxidized to a thioester, with concomitant reduction of NAD to NADH. The reduced NADH is then exchanged with the second NAD, and the thioester is attacked by a nucleophilic inorganic phosphate to produce BPG. It can use both NADP and NAD. In Synechocystis sp. (strain ATCC 27184 / PCC 6803 / Kazusa), this protein is Glyceraldehyde-3-phosphate dehydrogenase 2 (gap2).